The following is a 545-amino-acid chain: Leucine-rich repeat LGI family member 2 (545 aa).

An N-terminal signal peptide occupies residues 1-28 (MALRRGGCGALGLLLLLLGAACLIPRSA). In terms of domain architecture, LRRNT spans 29–65 (QVRRLARCPATCSCTKESIICVGSSWVPRIVPGDISS). The N-linked (GlcNAc...) asparagine glycan is linked to Asn-70. 3 LRR repeats span residues 86–107 (SLQL…AFAG), 110–131 (HLEY…AFRG), and 134–155 (DLTH…VFSD). The 51-residue stretch at 167–217 (NKFECDCKAKWLYLWLKMTNSTVSDVLCIGPPEYQEKKLNDVTSFDYECTT) folds into the LRRCT domain. Asn-186 carries N-linked (GlcNAc...) asparagine glycosylation. EAR repeat units follow at residues 219–261 (DFVV…EWDH), 265–307 (NFRS…KYDE), 311–358 (KFVK…KWNS), 360–403 (GFYS…QWNK), 407–450 (KFVP…RWNS), 452–494 (QFVE…QWDK), and 498–540 (LFKK…EHII). An N-linked (GlcNAc...) asparagine glycan is attached at Asn-271. An N-linked (GlcNAc...) asparagine glycan is attached at Asn-402.

Brain, heart and placenta.

The protein resides in the secreted. Functionally, required for the development of soma-targeting inhibitory GABAergic synapses made by parvalbumin-positive basket cells. This is Leucine-rich repeat LGI family member 2 (LGI2) from Homo sapiens (Human).